A 379-amino-acid polypeptide reads, in one-letter code: MNQAVIVAAKRTAFGKYGGTLKHLEPEQLLKPLFQHFKEKYLEVISKIDDVVLGNVVGNGGNIARKALLEAGLKDSIPGVTIDRQCGSGLESVQYACRMIQAGAGKVYIAGGVESTSRAPWKIKRPHSVYETALPEFYERASFAPEMSDPSMIQGAENVAKMYDVSRELQDEFAYRSHQLTAENVKNGNISQEILPITVKGEIFNTDESLKSHIPKDNFGRFKPVIKGGTVTAANSCMKNDGAVLLLIMEKDMAYELGFEHGLLFKDGVTVGVDSNFPGIGPVPAISNLLKRNQLTIENIEVIEINEAFSAQVVACQQALNISNTQLNIWGGALASGHPYGASGAQLVTRLFYMFDKETMIASMGIGGGLGNAALFTRF.

The active-site Acyl-thioester intermediate is the Cys-86. The Proton acceptor role is filled by His-338.

It belongs to the thiolase-like superfamily. Thiolase family.

This chain is Putative acetyl-CoA C-acetyltransferase VraB (vraB), found in Staphylococcus aureus (strain MSSA476).